Consider the following 233-residue polypeptide: Sugar fermentation stimulation protein homolog (233 aa).

This sequence belongs to the SfsA family.

The protein is Sugar fermentation stimulation protein homolog of Pyrobaculum neutrophilum (strain DSM 2338 / JCM 9278 / NBRC 100436 / V24Sta) (Thermoproteus neutrophilus).